A 285-amino-acid polypeptide reads, in one-letter code: Inositol oxygenase (285 aa).

Arg-29 lines the substrate pocket. Position 33 is a phosphoserine (Ser-33). Substrate is bound at residue 85–87 (DES). Residues His-98, His-123, and Asp-124 each coordinate Fe cation. Residues Lys-127 and 141–142 (GD) contribute to the substrate site. The Fe cation site is built by His-194, His-220, and Asp-253. Position 220–221 (220–221 (HS)) interacts with substrate.

This sequence belongs to the myo-inositol oxygenase family. Fe cation serves as cofactor.

It localises to the cytoplasm. The catalysed reaction is myo-inositol + O2 = D-glucuronate + H2O + H(+). It functions in the pathway polyol metabolism; myo-inositol degradation into D-glucuronate; D-glucuronate from myo-inositol: step 1/1. This Pongo abelii (Sumatran orangutan) protein is Inositol oxygenase (MIOX).